The chain runs to 483 residues: Proline--tRNA ligase (483 aa).

The protein belongs to the class-II aminoacyl-tRNA synthetase family. ProS type 3 subfamily. In terms of assembly, homodimer.

Its subcellular location is the cytoplasm. It carries out the reaction tRNA(Pro) + L-proline + ATP = L-prolyl-tRNA(Pro) + AMP + diphosphate. Catalyzes the attachment of proline to tRNA(Pro) in a two-step reaction: proline is first activated by ATP to form Pro-AMP and then transferred to the acceptor end of tRNA(Pro). The sequence is that of Proline--tRNA ligase from Mycoplasma pneumoniae (strain ATCC 29342 / M129 / Subtype 1) (Mycoplasmoides pneumoniae).